The chain runs to 702 residues: Ribosomal RNA large subunit methyltransferase K/L (702 aa).

Residues leucine 43–leucine 154 form the THUMP domain.

Belongs to the methyltransferase superfamily. RlmKL family.

It localises to the cytoplasm. It carries out the reaction guanosine(2445) in 23S rRNA + S-adenosyl-L-methionine = N(2)-methylguanosine(2445) in 23S rRNA + S-adenosyl-L-homocysteine + H(+). It catalyses the reaction guanosine(2069) in 23S rRNA + S-adenosyl-L-methionine = N(2)-methylguanosine(2069) in 23S rRNA + S-adenosyl-L-homocysteine + H(+). Specifically methylates the guanine in position 2445 (m2G2445) and the guanine in position 2069 (m7G2069) of 23S rRNA. The polypeptide is Ribosomal RNA large subunit methyltransferase K/L (Escherichia coli (strain SMS-3-5 / SECEC)).